The chain runs to 474 residues: 1-aminocyclopropane-1-carboxylate synthase 4 (474 aa).

2 residues coordinate substrate: glutamate 47 and tyrosine 85. An N6-(pyridoxal phosphate)lysine modification is found at lysine 273.

This sequence belongs to the class-I pyridoxal-phosphate-dependent aminotransferase family. As to quaternary structure, homodimer and heterodimer. In vivo, the relevance of heterodimerization with other ACS enzymes is however unsure. Interacts with XBAT32. Interacts (via its C-terminal region) with ETO1 and EOL1. The cofactor is pyridoxal 5'-phosphate. Ubiquitinated by XBAT32. Ubiquitination probably leads to its subsequent degradation, thus controlling ethylene production. In terms of tissue distribution, expressed in roots, leaves and flowers.

It carries out the reaction S-adenosyl-L-methionine = 1-aminocyclopropane-1-carboxylate + S-methyl-5'-thioadenosine + H(+). It functions in the pathway alkene biosynthesis; ethylene biosynthesis via S-adenosyl-L-methionine; ethylene from S-adenosyl-L-methionine: step 1/2. Its function is as follows. 1-aminocyclopropane-1-carboxylate synthase (ACS) enzymes catalyze the conversion of S-adenosyl-L-methionine (SAM) into 1-aminocyclopropane-1-carboxylate (ACC), a direct precursor of ethylene. The protein is 1-aminocyclopropane-1-carboxylate synthase 4 (ACS4) of Arabidopsis thaliana (Mouse-ear cress).